Consider the following 66-residue polypeptide: Large ribosomal subunit protein bL32 (66 aa).

This sequence belongs to the bacterial ribosomal protein bL32 family.

This is Large ribosomal subunit protein bL32 from Leptospira interrogans serogroup Icterohaemorrhagiae serovar copenhageni (strain Fiocruz L1-130).